A 229-amino-acid polypeptide reads, in one-letter code: NAD(P)H-hydrate epimerase (229 aa).

Residues Ala-9 to Leu-216 enclose the YjeF N-terminal domain. Asn-59–Asp-63 lines the (6S)-NADPHX pocket. Residues Asn-60 and Asp-124 each coordinate K(+). (6S)-NADPHX is bound by residues Gly-128–Pro-134 and Asp-157. Residue Ser-160 coordinates K(+).

Belongs to the NnrE/AIBP family. It depends on K(+) as a cofactor.

It catalyses the reaction (6R)-NADHX = (6S)-NADHX. The enzyme catalyses (6R)-NADPHX = (6S)-NADPHX. Catalyzes the epimerization of the S- and R-forms of NAD(P)HX, a damaged form of NAD(P)H that is a result of enzymatic or heat-dependent hydration. This is a prerequisite for the S-specific NAD(P)H-hydrate dehydratase to allow the repair of both epimers of NAD(P)HX. This is NAD(P)H-hydrate epimerase from Anopheles gambiae (African malaria mosquito).